The primary structure comprises 238 residues: 3-deoxy-manno-octulosonate cytidylyltransferase (238 aa).

This sequence belongs to the KdsB family.

It is found in the cytoplasm. The catalysed reaction is 3-deoxy-alpha-D-manno-oct-2-ulosonate + CTP = CMP-3-deoxy-beta-D-manno-octulosonate + diphosphate. Its pathway is nucleotide-sugar biosynthesis; CMP-3-deoxy-D-manno-octulosonate biosynthesis; CMP-3-deoxy-D-manno-octulosonate from 3-deoxy-D-manno-octulosonate and CTP: step 1/1. It participates in bacterial outer membrane biogenesis; lipopolysaccharide biosynthesis. In terms of biological role, activates KDO (a required 8-carbon sugar) for incorporation into bacterial lipopolysaccharide in Gram-negative bacteria. The protein is 3-deoxy-manno-octulosonate cytidylyltransferase of Nitratiruptor sp. (strain SB155-2).